We begin with the raw amino-acid sequence, 178 residues long: DNA-directed RNA polymerase V subunit 7 (178 aa).

This sequence belongs to the eukaryotic RPB7/RPC8 RNA polymerase subunit family. As to quaternary structure, component of the RNA polymerase V complex.

Its subcellular location is the nucleus. Functionally, DNA-dependent RNA polymerase catalyzes the transcription of DNA into RNA using the four ribonucleoside triphosphates as substrates. Component of RNA polymerase V involved in RNA-directed DNA methylation-dependent (RdDM) silencing of endogenous repeated sequences, including transposable elements. The protein is DNA-directed RNA polymerase V subunit 7 (NRPE7) of Arabidopsis thaliana (Mouse-ear cress).